A 688-amino-acid polypeptide reads, in one-letter code: Potassium-transporting ATPase ATP-binding subunit (688 aa).

4 helical membrane-spanning segments follow: residues 37–57, 65–85, 219–239, and 262–282; these read FLVY…LVGI, ILGI…AEAI, IALQ…TVSL, and VALL…SIGI. Aspartate 313 (4-aspartylphosphate intermediate) is an active-site residue. ATP contacts are provided by residues aspartate 350, glutamate 354, 383 to 390, and lysine 401; that span reads FTAKTRMS. Mg(2+) contacts are provided by aspartate 524 and aspartate 528. 3 consecutive transmembrane segments (helical) span residues 594–614, 622–642, and 668–688; these read FAII…LNIM, AIFS…PLAL, and IIVP…IGIV.

Belongs to the cation transport ATPase (P-type) (TC 3.A.3) family. Type IA subfamily. In terms of assembly, the system is composed of three essential subunits: KdpA, KdpB and KdpC.

The protein resides in the cell membrane. It catalyses the reaction K(+)(out) + ATP + H2O = K(+)(in) + ADP + phosphate + H(+). Part of the high-affinity ATP-driven potassium transport (or Kdp) system, which catalyzes the hydrolysis of ATP coupled with the electrogenic transport of potassium into the cytoplasm. This subunit is responsible for energy coupling to the transport system and for the release of the potassium ions to the cytoplasm. The chain is Potassium-transporting ATPase ATP-binding subunit from Clostridium botulinum (strain Eklund 17B / Type B).